Consider the following 1017-residue polypeptide: Rho-GTPase-activating protein LRG1 (1017 aa).

Met1 is modified (N-acetylmethionine). LIM zinc-binding domains are found at residues 28 to 88 and 98 to 148; these read CARC…LCQY and CHVC…CKYH. Residues 155 to 184 form the LIM zinc-binding 3; truncated domain; that stretch reads KRCKGCEFPISDQYIEFPKGEEIHCWHPEC. Positions 419 to 474 constitute an LIM zinc-binding 4 domain; sequence CAGCNKYIQEECIQFYEHRWHIACFTCSSCHKNINPRSLTDPTFNKEKKKILCSHC. Phosphoserine is present on Ser562. A disordered region spans residues 570-602; the sequence is TDLNDPTKQGDSKNLVIQTDDPSSSQQVSTREN. Positions 584–602 are enriched in polar residues; the sequence is LVIQTDDPSSSQQVSTREN. Residues 730–953 form the Rho-GAP domain; the sequence is APLDVLCEKW…YLITHNEEMA (224 aa).

Interacts with CDC42, RHO1 and RHO2.

Its subcellular location is the cytoplasm. It localises to the bud. The protein resides in the bud neck. Acts in signal transduction. Activates CDC42, RHO1 and RHO2. Negatively regulates 1,3-beta-glucan synthesis. May be responsible for the down-regulation of CDC42 during mating. This Saccharomyces cerevisiae (strain ATCC 204508 / S288c) (Baker's yeast) protein is Rho-GTPase-activating protein LRG1 (LRG1).